Reading from the N-terminus, the 195-residue chain is Heavy metal-associated isoprenylated plant protein 18 (195 aa).

2 disordered regions span residues 36-76 (DVVQ…KPET) and 145-172 (EKEKKDDEPITKDEENEIDRGVYMNPSS). 2 stretches are compositionally biased toward basic and acidic residues: residues 47–76 (TVTKKNEEGDIVDKKDETPEVEEKIDKPET) and 145–157 (EKEKKDDEPITKD). One can recognise an HMA domain in the interval 78–149 (TRKLEIHIAF…RIVKMEKEKK (72 aa)). Cysteine 192 carries the post-translational modification Cysteine methyl ester. Cysteine 192 is lipidated: S-farnesyl cysteine. Residues 193 to 195 (SIS) constitute a propeptide, removed in mature form.

Belongs to the HIPP family.

Probable heavy-metal-binding protein. Required for female gametophyte development and function. The chain is Heavy metal-associated isoprenylated plant protein 18 from Arabidopsis thaliana (Mouse-ear cress).